Here is a 213-residue protein sequence, read N- to C-terminus: Adenylate kinase (213 aa).

10 to 15 (GSGKGT) serves as a coordination point for ATP. The segment at 30-59 (SVGDLLRNIISSESKLGKGIKDTVESGNLI) is NMP. Residues Arg36, 57–59 (NLI), 83–86 (GFPR), and Gln90 each bind AMP. Positions 125–160 (DRLTCLDCKSIYSISSFKNTTCAKCKSTRLEKRIDD) are LID. Arg126 is a binding site for ATP. Positions 129 and 132 each coordinate Zn(2+). Residue 135 to 136 (IY) coordinates ATP. Cys146 and Cys149 together coordinate Zn(2+). 2 residues coordinate AMP: Arg157 and Arg169. Leu195 contributes to the ATP binding site.

It belongs to the adenylate kinase family. In terms of assembly, monomer.

It localises to the cytoplasm. It carries out the reaction AMP + ATP = 2 ADP. It participates in purine metabolism; AMP biosynthesis via salvage pathway; AMP from ADP: step 1/1. Its function is as follows. Catalyzes the reversible transfer of the terminal phosphate group between ATP and AMP. Plays an important role in cellular energy homeostasis and in adenine nucleotide metabolism. This chain is Adenylate kinase, found in Wolbachia pipientis subsp. Culex pipiens (strain wPip).